The chain runs to 365 residues: Homeobox protein knotted-1-like 7 (365 aa).

Residues 1 to 11 show a composition bias toward basic and acidic residues; the sequence is MEELEGHRGEG. Residues 1–20 are disordered; it reads MEELEGHRGEGRLPPPPPLL. An ELK domain is found at 227–247; that stretch reads ALKRHLLRKYSGYLGGLRKEL. Positions 248–311 form a DNA-binding region, homeobox; TALE-type; sequence SKKRKKGKLP…NQRKRHWKPT (64 aa).

It belongs to the TALE/KNOX homeobox family.

It is found in the nucleus. Functionally, probable transcription factor that may be involved in shoot formation during embryogenesis. The sequence is that of Homeobox protein knotted-1-like 7 (OSH3) from Oryza sativa subsp. japonica (Rice).